The following is a 338-amino-acid chain: ABC transporter I family member 6, chloroplastic (338 aa).

A chloroplast-targeting transit peptide spans 1-66 (MAGVNLQLRH…RTTRRSVIVS (66 aa)). An ABC transporter domain is found at 92-338 (LEVRDLRAVI…EKEGYKAISG (247 aa)). 126 to 133 (GKNGSGKS) is a binding site for ATP.

The protein belongs to the ABC transporter superfamily. ABCI family. In terms of assembly, interacts with NAP6. As to expression, present in all organs, with higher levels in aerial parts.

The protein resides in the plastid. The protein localises to the chloroplast. In terms of biological role, essential protein. Required during embryo development, especially at early stages. Involved in chloroplast differentiation. The polypeptide is ABC transporter I family member 6, chloroplastic (ABCI6) (Arabidopsis thaliana (Mouse-ear cress)).